The chain runs to 210 residues: uncharacterized protein (210 aa).

Disordered stretches follow at residues M1 to I21 and E168 to Q210. Residues I21 to S175 are a coiled coil. The segment covering S174–E184 has biased composition (polar residues).

Belongs to the SNF7 family.

This is an uncharacterized protein from Schizosaccharomyces pombe (strain 972 / ATCC 24843) (Fission yeast).